A 237-amino-acid chain; its full sequence is Phosphoribosylaminoimidazole-succinocarboxamide synthase (237 aa).

The protein belongs to the SAICAR synthetase family.

The catalysed reaction is 5-amino-1-(5-phospho-D-ribosyl)imidazole-4-carboxylate + L-aspartate + ATP = (2S)-2-[5-amino-1-(5-phospho-beta-D-ribosyl)imidazole-4-carboxamido]succinate + ADP + phosphate + 2 H(+). Its pathway is purine metabolism; IMP biosynthesis via de novo pathway; 5-amino-1-(5-phospho-D-ribosyl)imidazole-4-carboxamide from 5-amino-1-(5-phospho-D-ribosyl)imidazole-4-carboxylate: step 1/2. The chain is Phosphoribosylaminoimidazole-succinocarboxamide synthase from Serratia proteamaculans (strain 568).